We begin with the raw amino-acid sequence, 622 residues long: Low affinity potassium transport system protein Kup (622 aa).

12 helical membrane-spanning segments follow: residues 9 to 29 (LPAITLAAIGVVYGDIGTSPL), 49 to 69 (VFGFLSLIFWLLIFVVSIKYL), 103 to 123 (VIMGLIGGSFFYGEVVITPAI), 137 to 157 (PQLDTWIVPLSIIVLTLLFMI), 165 to 185 (VGKLFAPIMLTWFLILAGLGL), 213 to 233 (VSFIALGAVVLSITGGEVLYA), 247 to 267 (WFTVVLPSLTLNYFGQGALLL), 276 to 296 (PFFLLAPDWALIPLLIIAALA), 337 to 357 (IYIPFVNWMLYVAVVIVIVSF), 363 to 383 (LAAAYGIAVTGTMVLTSILST), 396 to 416 (FVALILIAFLCVDIPLFTANL), and 419 to 439 (LLSGGWLPLSLGTVMFIVMTT).

This sequence belongs to the HAK/KUP transporter (TC 2.A.72) family.

It is found in the cell inner membrane. It catalyses the reaction K(+)(in) + H(+)(in) = K(+)(out) + H(+)(out). Responsible for the low-affinity transport of potassium into the cell. Likely operates as a K(+):H(+) symporter. This chain is Low affinity potassium transport system protein Kup, found in Shigella flexneri.